We begin with the raw amino-acid sequence, 291 residues long: Elongation factor Ts (291 aa).

The involved in Mg(2+) ion dislocation from EF-Tu stretch occupies residues 79–82 (TDFV).

The protein belongs to the EF-Ts family.

It is found in the cytoplasm. Its function is as follows. Associates with the EF-Tu.GDP complex and induces the exchange of GDP to GTP. It remains bound to the aminoacyl-tRNA.EF-Tu.GTP complex up to the GTP hydrolysis stage on the ribosome. This chain is Elongation factor Ts, found in Ruegeria pomeroyi (strain ATCC 700808 / DSM 15171 / DSS-3) (Silicibacter pomeroyi).